The sequence spans 448 residues: Protein chibby homolog 2 (448 aa).

A phosphoserine mark is found at serine 41, serine 86, serine 89, serine 97, serine 124, serine 144, serine 148, and serine 150. Residues 163 to 198 are a coiled coil; the sequence is AKEFVLQEENKSLREENKALREENRMLRKENKILQV. The segment at 206–226 is disordered; it reads SLGREESRPPSPLPQKDSASL. A phosphoserine mark is found at serine 212 and serine 225. Residues 242 to 267 adopt a coiled-coil conformation; the sequence is KEDSTLQLLREENRALQQLLEQKQAY. Residues 270–321 form a disordered region; that stretch reads QTEDAAAPAEESKPAPSPHEEPCSPGLLQDQGSGLSSHFEEPRGPPAPQEDS. Basic and acidic residues predominate over residues 279 to 291; the sequence is EESKPAPSPHEEP. A phosphoserine mark is found at serine 335 and serine 338. Residues 356–414 are a coiled coil; it reads LQLLREMRQALQALLKENRLLQEENRTLQVLRAEHRGFQEENKALWENNKLKLQQKLVI.

It belongs to the chibby family. SPERT subfamily. As to quaternary structure, homodimer. Binds to NEK1.

This is Protein chibby homolog 2 (CBY2) from Macaca fascicularis (Crab-eating macaque).